Consider the following 216-residue polypeptide: Protein E4.2 (216 aa).

This is Protein E4.2 from Pantherophis guttatus (Corn snake).